We begin with the raw amino-acid sequence, 233 residues long: MDPQLMEVSQQFERFKAAFIIKDFDTCSSLLSQLKLFDHYLISLSLNALLLLTCALFFLCTRNRIPPSPQENLIMGLNLLRLLVQNRIAEFHTELGLLSSATLENPCIKHAVELEQSFMEGAYNRVLSARQTAPDETYVYFMDLLAKTIRDEIAGCSEKAYDHLSISEGCKMLLFSSDQQLLTYVNEEHPEWEVKDGLVVFQKTRETAPCKEIPSLQLINQTLSYTRELERIL.

Met-1 is modified (N-acetylmethionine). The 180-residue stretch at 38-217 (DHYLISLSLN…APCKEIPSLQ (180 aa)) folds into the PCI domain.

Belongs to the proteasome subunit S14 family. As to quaternary structure, component of the 19S regulatory particle (RP/PA700) lid subcomplex of the 26S proteasome. The 26S proteasome is composed of a core protease (CP), known as the 20S proteasome, capped at one or both ends by the 19S regulatory particle (RP/PA700). The RP/PA700 complex is composed of at least 17 different subunits in two subcomplexes, the base and the lid, which form the portions proximal and distal to the 20S proteolytic core, respectively. Interacts with UCH1 and UCH2.

Acts as a regulatory subunit of the 26S proteasome which is involved in the ATP-dependent degradation of ubiquitinated proteins. The chain is Putative 26S proteasome non-ATPase regulatory subunit 8 homolog B from Arabidopsis thaliana (Mouse-ear cress).